Consider the following 353-residue polypeptide: Galectin-9 (353 aa).

Positions 17–147 (FTGPIQGGLQ…CLKLSFITFQ (131 aa)) constitute a Galectin 1 domain. A beta-D-galactoside-binding positions include asparagine 47, histidine 60, arginine 64, asparagine 74, and 81 to 87 (WGPEERK). The interval 167-186 (QFPRTPKGRKQKTQNFRPAH) is disordered. One can recognise a Galectin 2 domain in the interval 225–353 (FYTPIPNGLY…GDIQLTHVQT (129 aa)). A beta-D-galactoside-binding positions include histidine 265, arginine 269, threonine 279, and 285–291 (WGQEERS).

Homodimer. As to expression, accentuated expression in liver and thymus of embryo, detected in embryonic heart, brain, lung, liver, and kidney. Highly expressed in adult thymus, small intestine, and liver, and to a lesser extent in lung, kidney, spleen, cardiac, and skeletal muscle. Barely detectable in brain and reticulocyte. Expressed in placenta, uterus and decidua during pregnancy. Expressed in CD4+ T-cells with higher levels in iTreg cells than other T-cell types and sustained high levels throughout iTreg cell differentiation (at protein level). Expressed in myeloid cells in lung. Constitutively expressed in microglia. Isoform 1 is expressed exclusively in the small intestine. Isoform 2 expression in decidua increases in pathological pregnancy from gestation day 7.5 to 13.5 and it is higher than in normal pregnancy. Isoform 3 expression in decidua is higher in normal pregnancy than in pathological pregnancy.

It is found in the cytoplasm. Its subcellular location is the nucleus. The protein localises to the secreted. In terms of biological role, binds galactosides. Has high affinity for the Forssman pentasaccharide. Ligand for HAVCR2/TIM3. Binding to HAVCR2 induces T-helper type 1 lymphocyte (Th1) death. Also stimulates bactericidal activity in infected macrophages by causing macrophage activation and IL1B secretion which restricts intracellular bacterial growth. Ligand for P4HB; the interaction retains P4HB at the cell surface of Th2 T-helper cells, increasing disulfide reductase activity at the plasma membrane, altering the plasma membrane redox state and enhancing cell migration. Ligand for CD44; the interaction enhances binding of SMAD3 to the FOXP3 promoter, leading to up-regulation of FOXP3 expression and increased induced regulatory T (iTreg) cell stability and suppressive function. Promotes ability of mesenchymal stromal cells to suppress T-cell proliferation. Expands regulatory T-cells and induces cytotoxic T-cell apoptosis following virus infection. Activates ERK1/2 phosphorylation inducing cytokine (IL-6, IL-8, IL-12) and chemokine (CCL2) production in mast and dendritic cells. Inhibits degranulation and induces apoptosis of mast cells. Induces maturation and migration of dendritic cells. Inhibits natural killer (NK) cell function. Can transform NK cell phenotype from peripheral to decidual during pregnancy. Astrocyte derived galectin-9 enhances microglial TNF production. May play a role in thymocyte-epithelial interactions relevant to the biology of the thymus. May provide the molecular basis for urate flux across cell membranes, allowing urate that is formed during purine metabolism to efflux from cells and serving as an electrogenic transporter that plays an important role in renal and gastrointestinal urate excretion. Highly selective to the anion urate. Its function is as follows. Acts as an eosinophil chemoattractant. It also inhibits angiogenesis. Suppresses IFNG production by natural killer cells. This is Galectin-9 (Lgals9) from Mus musculus (Mouse).